Reading from the N-terminus, the 281-residue chain is Bifunctional protein FolD (281 aa).

NADP(+)-binding positions include 165–167, Thr192, and Val233; that span reads GRG.

Belongs to the tetrahydrofolate dehydrogenase/cyclohydrolase family. As to quaternary structure, homodimer.

The catalysed reaction is (6R)-5,10-methylene-5,6,7,8-tetrahydrofolate + NADP(+) = (6R)-5,10-methenyltetrahydrofolate + NADPH. It carries out the reaction (6R)-5,10-methenyltetrahydrofolate + H2O = (6R)-10-formyltetrahydrofolate + H(+). Its pathway is one-carbon metabolism; tetrahydrofolate interconversion. Catalyzes the oxidation of 5,10-methylenetetrahydrofolate to 5,10-methenyltetrahydrofolate and then the hydrolysis of 5,10-methenyltetrahydrofolate to 10-formyltetrahydrofolate. This is Bifunctional protein FolD from Mycobacterium bovis (strain BCG / Tokyo 172 / ATCC 35737 / TMC 1019).